The chain runs to 627 residues: uncharacterized protein (627 aa).

Positions 21 to 136 constitute a WH1 domain; sequence GISASDKILS…NSVCKRQTRS (116 aa). Residues 310–347 are disordered; the sequence is RGSLSTPRIPTHRDSYRSATKPDTVPKQTPPPTHNSYV.

This is an uncharacterized protein from Caenorhabditis elegans.